We begin with the raw amino-acid sequence, 249 residues long: Triosephosphate isomerase (249 aa).

9-11 (NWK) contributes to the substrate binding site. His-91 (electrophile) is an active-site residue. Glu-163 serves as the catalytic Proton acceptor. Residues Gly-169, Ser-209, and 230 to 231 (GG) contribute to the substrate site.

Belongs to the triosephosphate isomerase family. In terms of assembly, homodimer.

Its subcellular location is the cytoplasm. It carries out the reaction D-glyceraldehyde 3-phosphate = dihydroxyacetone phosphate. It functions in the pathway carbohydrate biosynthesis; gluconeogenesis. It participates in carbohydrate degradation; glycolysis; D-glyceraldehyde 3-phosphate from glycerone phosphate: step 1/1. Functionally, involved in the gluconeogenesis. Catalyzes stereospecifically the conversion of dihydroxyacetone phosphate (DHAP) to D-glyceraldehyde-3-phosphate (G3P). In Halorhodospira halophila (strain DSM 244 / SL1) (Ectothiorhodospira halophila (strain DSM 244 / SL1)), this protein is Triosephosphate isomerase.